The chain runs to 226 residues: Purine nucleoside phosphorylase Cj1217c (226 aa).

Positions 58, 93, and 109 each coordinate Zn(2+).

It belongs to the purine nucleoside phosphorylase YfiH/LACC1 family. Homodimer. Cu(2+) is required as a cofactor. Requires Zn(2+) as cofactor.

It carries out the reaction adenosine + phosphate = alpha-D-ribose 1-phosphate + adenine. It catalyses the reaction S-methyl-5'-thioadenosine + phosphate = 5-(methylsulfanyl)-alpha-D-ribose 1-phosphate + adenine. The enzyme catalyses inosine + phosphate = alpha-D-ribose 1-phosphate + hypoxanthine. The catalysed reaction is adenosine + H2O + H(+) = inosine + NH4(+). In terms of biological role, purine nucleoside enzyme that catalyzes the phosphorolysis of adenosine and inosine nucleosides, yielding D-ribose 1-phosphate and the respective free bases, adenine and hypoxanthine. Also catalyzes the phosphorolysis of S-methyl-5'-thioadenosine into adenine and S-methyl-5-thio-alpha-D-ribose 1-phosphate. Also has adenosine deaminase activity. The chain is Purine nucleoside phosphorylase Cj1217c from Campylobacter jejuni subsp. jejuni serotype O:2 (strain ATCC 700819 / NCTC 11168).